Reading from the N-terminus, the 395-residue chain is Xylose isomerase (395 aa).

Residues H54 and D57 contribute to the active site. Residues E181, E217, H220, D245, D255, D257, and D293 each coordinate Mg(2+).

The protein belongs to the xylose isomerase family. Homotetramer. Mg(2+) is required as a cofactor.

It is found in the cytoplasm. The enzyme catalyses alpha-D-xylose = alpha-D-xylulofuranose. The chain is Xylose isomerase from Pseudarthrobacter chlorophenolicus (strain ATCC 700700 / DSM 12829 / CIP 107037 / JCM 12360 / KCTC 9906 / NCIMB 13794 / A6) (Arthrobacter chlorophenolicus).